We begin with the raw amino-acid sequence, 63 residues long: MPKMKTVRGAAKRFKVGKNKIKRGSAFRSHILTKKPSKRMRDLRGPQYVDSTNVPAVRKMLGV.

This sequence belongs to the bacterial ribosomal protein bL35 family.

This is Large ribosomal subunit protein bL35 from Campylobacter concisus (strain 13826).